The following is a 212-amino-acid chain: Pyridoxine/pyridoxamine 5'-phosphate oxidase (212 aa).

Residues 59-64, 74-75, Lys81, and Gln103 each bind FMN; these read RMVLMK and YS. Lys64 is a binding site for substrate. Residues Tyr121 and Arg125 each coordinate substrate. FMN-binding positions include 138–139 and Trp183; that span reads QS. 189–191 is a binding site for substrate; that stretch reads RLH. Residue Arg193 participates in FMN binding.

This sequence belongs to the pyridoxamine 5'-phosphate oxidase family. Homodimer. The cofactor is FMN.

The catalysed reaction is pyridoxamine 5'-phosphate + O2 + H2O = pyridoxal 5'-phosphate + H2O2 + NH4(+). It carries out the reaction pyridoxine 5'-phosphate + O2 = pyridoxal 5'-phosphate + H2O2. Its pathway is cofactor metabolism; pyridoxal 5'-phosphate salvage; pyridoxal 5'-phosphate from pyridoxamine 5'-phosphate: step 1/1. It functions in the pathway cofactor metabolism; pyridoxal 5'-phosphate salvage; pyridoxal 5'-phosphate from pyridoxine 5'-phosphate: step 1/1. Its function is as follows. Catalyzes the oxidation of either pyridoxine 5'-phosphate (PNP) or pyridoxamine 5'-phosphate (PMP) into pyridoxal 5'-phosphate (PLP). The protein is Pyridoxine/pyridoxamine 5'-phosphate oxidase of Rhodopseudomonas palustris (strain TIE-1).